We begin with the raw amino-acid sequence, 784 residues long: Toll-like receptor 2 (784 aa).

The N-terminal stretch at 1-20 (MPRALWTAWVWAVIILSMEG) is a signal peptide. The Extracellular segment spans residues 21–587 (ASHQASSLSC…ARLSLSECHR (567 aa)). The cysteines at positions 30 and 36 are disulfide-linked. LRR repeat units follow at residues 54-77 (VKSLDLSNNEITYVSNRDLQRCVN), 78-101 (LKTLRLGANEIHTVEEDSFFHLRN), 102-125 (LEYLDLSYNRLSNLSSSWFRSLYA), 126-150 (LKFLNLLGNVYKTLGETSLFSHLPN), 151-175 (LRTLKVGNSNSFTEIHEKDFTGLIF), 176-199 (LEELEISAQNLQIYVPKSLKSIQN), 200-223 (ISHLILHLKQPVLLVDILVDIVSS), 224-250 (LDCLELRDTNLHTFHFSEASISEMNTS), 251-278 (VKKLIFRNVQFTDESFVEVVKLFNYVSG), 279-308 (ILEVEFDDCTHDGIGDFRALSLDRIRHLGN), 309-337 (VETLTIRKLHIPQFFLFHDLSSIYPLTGK), 338-361 (VKRVTIESSKVFLVPCLLSQHLKS), 362-388 (LEYLDLSENLMSEETLKNSACKDAWPF), 389-414 (LQTLVLRQNRLKSLEKTGELLLTLKN), 415-437 (LNNLDISKNNFLSMPETCQWPGK), 438-457 (MKQLNLSSTRIHSLTQCLPQ), 458-478 (TLEILDVSNNNLDSFSLILPQ), 479-500 (LKELYISRNKLKTLPDASFLPV), and 501-524 (LSVMRISGNIINTFSKEQLDSFPQ). Asparagine 114 carries N-linked (GlcNAc...) asparagine glycosylation. Asparagine 199 is a glycosylation site (N-linked (GlcNAc...) asparagine). An N-linked (GlcNAc...) asparagine glycan is attached at asparagine 248. Cysteine 353 and cysteine 382 are oxidised to a cystine. Cysteine 432 and cysteine 454 are oxidised to a cystine. An N-linked (GlcNAc...) asparagine glycan is attached at asparagine 442. One can recognise an LRRCT domain in the interval 525-579 (LKALEAGGNNFICSCDFLSFTQGQQALARVLVDWPDGYRCDAPSHVRGQRVQDAR). A helical transmembrane segment spans residues 588 to 608 (AAVVSAVCCALFLLLLLTGVL). The Cytoplasmic portion of the chain corresponds to 609 to 784 (CHRFHGLWYM…WLNLRAAIRS (176 aa)). Positions 639-782 (LCYDAFVSYS…AFWLNLRAAI (144 aa)) constitute a TIR domain. A Glycyl lysine isopeptide (Lys-Gly) (interchain with G-Cter in ubiquitin) cross-link involves residue lysine 754. The ATG16L1-binding motif motif lies at 761–778 (YLEWPTDETQQEAFWLNL).

It belongs to the Toll-like receptor family. In terms of assembly, interacts with LY96, TLR1 and TLR6 (via extracellular domain). TLR2 seems to exist in heterodimers with either TLR1 or TLR6 before stimulation by the ligand. The heterodimers form bigger oligomers in response to their corresponding ligands as well as further heterotypic associations with other receptors such as CD14 and/or CD36. Binds MYD88 (via TIR domain). Interacts with TICAM1. Interacts with CNPY3. Interacts with ATG16L1. Interacts with PPP1R11. Interacts with TICAM2. Interacts with TIRAP. Ubiquitinated at Lys-754 by PPP1R11, leading to its degradation. Deubiquitinated by USP2. Post-translationally, glycosylation of Asn-442 is critical for secretion of the N-terminal ectodomain of TLR2.

The protein resides in the membrane. The protein localises to the cytoplasmic vesicle. It is found in the phagosome membrane. It localises to the membrane raft. Functionally, cooperates with LY96 to mediate the innate immune response to bacterial lipoproteins and other microbial cell wall components. Cooperates with TLR1 or TLR6 to mediate the innate immune response to bacterial lipoproteins or lipopeptides. Acts via MYD88 and TRAF6, leading to NF-kappa-B activation, cytokine secretion and the inflammatory response. May also promote apoptosis in response to lipoproteins. Forms activation clusters composed of several receptors depending on the ligand, these clusters trigger signaling from the cell surface and subsequently are targeted to the Golgi in a lipid-raft dependent pathway. Forms the cluster TLR2:TLR6:CD14:CD36 in response to diacylated lipopeptides and TLR2:TLR1:CD14 in response to triacylated lipopeptides. The sequence is that of Toll-like receptor 2 (TLR2) from Capra hircus (Goat).